The primary structure comprises 256 residues: Acetylglutamate kinase (256 aa).

Substrate-binding positions include 40 to 41 (GG), R62, and N154.

This sequence belongs to the acetylglutamate kinase family. ArgB subfamily.

It is found in the cytoplasm. It catalyses the reaction N-acetyl-L-glutamate + ATP = N-acetyl-L-glutamyl 5-phosphate + ADP. The protein operates within amino-acid biosynthesis; L-arginine biosynthesis; N(2)-acetyl-L-ornithine from L-glutamate: step 2/4. In terms of biological role, catalyzes the ATP-dependent phosphorylation of N-acetyl-L-glutamate. The protein is Acetylglutamate kinase of Staphylococcus aureus (strain bovine RF122 / ET3-1).